A 177-amino-acid chain; its full sequence is Large ribosomal subunit protein uL6 (177 aa).

The protein belongs to the universal ribosomal protein uL6 family. As to quaternary structure, part of the 50S ribosomal subunit.

Functionally, this protein binds to the 23S rRNA, and is important in its secondary structure. It is located near the subunit interface in the base of the L7/L12 stalk, and near the tRNA binding site of the peptidyltransferase center. The chain is Large ribosomal subunit protein uL6 from Aliivibrio fischeri (strain MJ11) (Vibrio fischeri).